The sequence spans 154 residues: Iron sulfur cluster assembly protein 1, mitochondrial (154 aa).

The protein belongs to the NifU family. In terms of assembly, component of the core Fe-S cluster (ISC) assembly machinery. [2Fe-2S] cluster is required as a cofactor.

The protein localises to the mitochondrion matrix. It participates in cofactor biosynthesis; iron-sulfur cluster biosynthesis. Its function is as follows. Scaffold protein for the de novo synthesis of iron-sulfur (Fe-S) clusters within mitochondria, which is required for maturation of both mitochondrial and cytoplasmic [2Fe-2S] and [4Fe-4S] proteins. First, a [2Fe-2S] cluster is transiently assembled on the scaffold protein ISU1. In a second step, the cluster is released from ISU1, transferred to a glutaredoxin, followed by the formation of mitochondrial [2Fe-2S] proteins, the synthesis of [4Fe-4S] clusters and their target-specific insertion into the recipient apoproteins. Cluster assembly on ISU1 depends on the function of the cysteine desulfurase complex NFS1-ISD11, which serves as the sulfur donor for cluster synthesis, the iron-binding protein frataxin as the putative iron donor, and the electron transfer chain comprised of ferredoxin reductase and ferredoxin, which receive their electrons from NADH. The sequence is that of Iron sulfur cluster assembly protein 1, mitochondrial (ISU1) from Eremothecium gossypii (strain ATCC 10895 / CBS 109.51 / FGSC 9923 / NRRL Y-1056) (Yeast).